The following is a 195-amino-acid chain: Putative archaetidylserine decarboxylase proenzyme (195 aa).

The active-site Schiff-base intermediate with substrate; via pyruvic acid is the S159. The residue at position 159 (S159) is a Pyruvic acid (Ser); by autocatalysis.

Belongs to the phosphatidylserine decarboxylase family. PSD-A subfamily. In terms of assembly, heterodimer of a large membrane-associated beta subunit and a small pyruvoyl-containing alpha subunit. It depends on pyruvate as a cofactor. Post-translationally, is synthesized initially as an inactive proenzyme. Formation of the active enzyme involves a self-maturation process in which the active site pyruvoyl group is generated from an internal serine residue via an autocatalytic post-translational modification. Two non-identical subunits are generated from the proenzyme in this reaction, and the pyruvate is formed at the N-terminus of the alpha chain, which is derived from the carboxyl end of the proenzyme. The autoendoproteolytic cleavage occurs by a canonical serine protease mechanism, in which the side chain hydroxyl group of the serine supplies its oxygen atom to form the C-terminus of the beta chain, while the remainder of the serine residue undergoes an oxidative deamination to produce ammonia and the pyruvoyl prosthetic group on the alpha chain. During this reaction, the Ser that is part of the protease active site of the proenzyme becomes the pyruvoyl prosthetic group, which constitutes an essential element of the active site of the mature decarboxylase. Is synthesized initially as an inactive proenzyme. Formation of the active enzyme involves a self-maturation process in which the active site pyruvoyl group is generated from an internal serine residue via an autocatalytic post-translational modification. Two non-identical subunits are generated from the proenzyme in this reaction, and the pyruvate is formed at the N-terminus of the alpha chain, which is derived from the carboxyl end of the proenzyme. The post-translation cleavage follows an unusual pathway, termed non-hydrolytic serinolysis, in which the side chain hydroxyl group of the serine supplies its oxygen atom to form the C-terminus of the beta chain, while the remainder of the serine residue undergoes an oxidative deamination to produce ammonia and the pyruvoyl prosthetic group on the alpha chain.

Its subcellular location is the cell membrane. It catalyses the reaction archaetidylserine + H(+) = archaetidylethanolamine + CO2. Catalyzes the formation of archaetidylethanolamine (PtdEtn) from archaetidylserine (PtdSer). The protein is Putative archaetidylserine decarboxylase proenzyme of Archaeoglobus fulgidus (strain ATCC 49558 / DSM 4304 / JCM 9628 / NBRC 100126 / VC-16).